A 1378-amino-acid polypeptide reads, in one-letter code: DNA-directed RNA polymerase subunit beta (1378 aa).

The protein belongs to the RNA polymerase beta chain family. As to quaternary structure, the RNAP catalytic core consists of 2 alpha, 1 beta, 1 beta' and 1 omega subunit. When a sigma factor is associated with the core the holoenzyme is formed, which can initiate transcription.

The catalysed reaction is RNA(n) + a ribonucleoside 5'-triphosphate = RNA(n+1) + diphosphate. DNA-dependent RNA polymerase catalyzes the transcription of DNA into RNA using the four ribonucleoside triphosphates as substrates. The sequence is that of DNA-directed RNA polymerase subunit beta from Ruegeria pomeroyi (strain ATCC 700808 / DSM 15171 / DSS-3) (Silicibacter pomeroyi).